Consider the following 424-residue polypeptide: Arogenate dehydratase 4, chloroplastic (424 aa).

The N-terminal 34 residues, 1–34 (MQAATSCDLKFRSTDPTSRNKCFSHAIPKRVAVT), are a transit peptide targeting the chloroplast. The 178-residue stretch at 126–303 (RVAYQGVPGA…NVTRFLMLAR (178 aa)) folds into the Prephenate dehydratase domain. Positions 319–410 (VFAAQEHKGT…SFLRVLGSYP (92 aa)) constitute an ACT domain.

Expressed in roots, leaves, stems, flowers and siliques. More abundant in stems and roots.

It is found in the plastid. It localises to the chloroplast stroma. The catalysed reaction is L-arogenate + H(+) = L-phenylalanine + CO2 + H2O. Its pathway is amino-acid biosynthesis; L-phenylalanine biosynthesis; L-phenylalanine from L-arogenate: step 1/1. Converts the prephenate produced from the shikimate-chorismate pathway into phenylalanine. In Arabidopsis thaliana (Mouse-ear cress), this protein is Arogenate dehydratase 4, chloroplastic.